The sequence spans 487 residues: Glutamyl-tRNA(Gln) amidotransferase subunit A (487 aa).

Active-site charge relay system residues include Lys74 and Ser149. Catalysis depends on Ser173, which acts as the Acyl-ester intermediate.

Belongs to the amidase family. GatA subfamily. As to quaternary structure, heterotrimer of A, B and C subunits.

It carries out the reaction L-glutamyl-tRNA(Gln) + L-glutamine + ATP + H2O = L-glutaminyl-tRNA(Gln) + L-glutamate + ADP + phosphate + H(+). Allows the formation of correctly charged Gln-tRNA(Gln) through the transamidation of misacylated Glu-tRNA(Gln) in organisms which lack glutaminyl-tRNA synthetase. The reaction takes place in the presence of glutamine and ATP through an activated gamma-phospho-Glu-tRNA(Gln). The protein is Glutamyl-tRNA(Gln) amidotransferase subunit A of Synechococcus sp. (strain CC9311).